The primary structure comprises 115 residues: Large ribosomal subunit protein bL20 (115 aa).

This sequence belongs to the bacterial ribosomal protein bL20 family.

Functionally, binds directly to 23S ribosomal RNA and is necessary for the in vitro assembly process of the 50S ribosomal subunit. It is not involved in the protein synthesizing functions of that subunit. This chain is Large ribosomal subunit protein bL20, found in Prochlorococcus marinus (strain NATL2A).